The chain runs to 258 residues: Axonemal dynein light intermediate polypeptide 1 (258 aa).

Disordered regions lie at residues 19 to 60 (RNTE…CVPD) and 207 to 231 (VNEQ…EEKK). The segment covering 34 to 48 (SPQQPGPSGSAPQLP) has biased composition (low complexity). Residues 176-255 (MRKALQAEQG…LKAQLEGIIA (80 aa)) are a coiled coil.

The protein belongs to the inner dynein arm light chain family. Interacts with CFAP45. Interacts with DYNC1H1.

Its subcellular location is the cell projection. The protein resides in the cilium. It is found in the flagellum. The protein localises to the dynein axonemal particle. It localises to the cytoplasm. Involved in sperm flagellum assembly. This is Axonemal dynein light intermediate polypeptide 1 (DNALI1) from Macaca fascicularis (Crab-eating macaque).